The sequence spans 508 residues: Ribonuclease Y (508 aa).

The chain crosses the membrane as a helical span at residues Met-1 to Asn-21. The KH domain maps to Thr-198–Val-283. One can recognise an HD domain in the interval Val-324–Ala-417.

It belongs to the RNase Y family.

It is found in the cell membrane. In terms of biological role, endoribonuclease that initiates mRNA decay. The chain is Ribonuclease Y from Thermotoga maritima (strain ATCC 43589 / DSM 3109 / JCM 10099 / NBRC 100826 / MSB8).